Consider the following 450-residue polypeptide: Phosphoglucosamine mutase (450 aa).

Catalysis depends on S102, which acts as the Phosphoserine intermediate. S102, D242, D244, and D246 together coordinate Mg(2+). At S102 the chain carries Phosphoserine.

This sequence belongs to the phosphohexose mutase family. Requires Mg(2+) as cofactor. Activated by phosphorylation.

It catalyses the reaction alpha-D-glucosamine 1-phosphate = D-glucosamine 6-phosphate. In terms of biological role, catalyzes the conversion of glucosamine-6-phosphate to glucosamine-1-phosphate. This is Phosphoglucosamine mutase from Staphylococcus haemolyticus (strain JCSC1435).